The sequence spans 533 residues: Malate synthase A (533 aa).

The active-site Proton acceptor is arginine 166. The active-site Proton donor is the aspartate 447.

This sequence belongs to the malate synthase family.

The protein localises to the cytoplasm. It carries out the reaction glyoxylate + acetyl-CoA + H2O = (S)-malate + CoA + H(+). It functions in the pathway carbohydrate metabolism; glyoxylate cycle; (S)-malate from isocitrate: step 2/2. This Escherichia coli (strain K12) protein is Malate synthase A (aceB).